We begin with the raw amino-acid sequence, 115 residues long: Large ribosomal subunit protein bL20 (115 aa).

This sequence belongs to the bacterial ribosomal protein bL20 family.

In terms of biological role, binds directly to 23S ribosomal RNA and is necessary for the in vitro assembly process of the 50S ribosomal subunit. It is not involved in the protein synthesizing functions of that subunit. The sequence is that of Large ribosomal subunit protein bL20 from Methylococcus capsulatus (strain ATCC 33009 / NCIMB 11132 / Bath).